Here is a 442-residue protein sequence, read N- to C-terminus: Tryptophan synthase beta chain 2 (442 aa).

Position 122 is an N6-(pyridoxal phosphate)lysine (lysine 122).

Belongs to the TrpB family. In terms of assembly, tetramer of two alpha and two beta chains. It depends on pyridoxal 5'-phosphate as a cofactor.

It carries out the reaction (1S,2R)-1-C-(indol-3-yl)glycerol 3-phosphate + L-serine = D-glyceraldehyde 3-phosphate + L-tryptophan + H2O. It participates in amino-acid biosynthesis; L-tryptophan biosynthesis; L-tryptophan from chorismate: step 5/5. The beta subunit is responsible for the synthesis of L-tryptophan from indole and L-serine. This is Tryptophan synthase beta chain 2 (trpB2) from Methanosarcina acetivorans (strain ATCC 35395 / DSM 2834 / JCM 12185 / C2A).